The chain runs to 294 residues: Release factor glutamine methyltransferase (294 aa).

S-adenosyl-L-methionine contacts are provided by Glu148 and Asn201. Asn201–Tyr204 is a substrate binding site.

The protein belongs to the protein N5-glutamine methyltransferase family. PrmC subfamily.

The enzyme catalyses L-glutaminyl-[peptide chain release factor] + S-adenosyl-L-methionine = N(5)-methyl-L-glutaminyl-[peptide chain release factor] + S-adenosyl-L-homocysteine + H(+). Methylates the class 1 translation termination release factors RF1/PrfA and RF2/PrfB on the glutamine residue of the universally conserved GGQ motif. In Bifidobacterium longum (strain NCC 2705), this protein is Release factor glutamine methyltransferase.